The sequence spans 409 residues: MLTRGFTSIGKIASRGLSSTFYQDAFQLSDQLTEDERSLMLSAREYCQERLLPRVTEAYRTEKFDPSLIPEMGSMGLLGAPYQGYGCAGTSTVGYGLIAREVERVDSGYRSTMSVQTSLVIGPIYNYGSEDQKQKYIPDLASGKKIGCFGLTEPNHGSNPGGMETKATWDETTKTYKLNGSKTWISNSPVSDVMVVWARSARHNNKIKGFILERGMKGLTTPKIEGKLSLRASITGQIAMDDVPVPEENLLPNAEGLQGPFGCLNNARLGIAWGALGAAEECFHLARQYTLDRQQFGRPLAQNQLMQLKMADMLTEISLGLQGCLRVSRLKDEGKVQSEQISIIKRNSCGKALEVARKARDMLGGNGIVDEYHIMRHMVNLETVNTYEGTHDVHALILGRAITGLNGFC.

Substrate is bound at residue 110-111 (RS). Residues 149–152 (FGLT), Ser158, and 184–186 (WIS) contribute to the FAD site. Ser158 is a binding site for substrate. Substrate is bound by residues 261–265 (FGCLN) and Arg268. The Proton acceptor role is filled by Glu388. Thr390 and Phe408 together coordinate FAD.

It belongs to the acyl-CoA dehydrogenase family. FAD serves as cofactor.

It localises to the mitochondrion matrix. It carries out the reaction glutaryl-CoA + oxidized [electron-transfer flavoprotein] + 2 H(+) = (2E)-butenoyl-CoA + reduced [electron-transfer flavoprotein] + CO2. Its pathway is amino-acid metabolism; lysine degradation. It functions in the pathway amino-acid metabolism; tryptophan metabolism. The chain is Probable glutaryl-CoA dehydrogenase, mitochondrial from Caenorhabditis elegans.